Reading from the N-terminus, the 314-residue chain is 2,3-dihydroxyphenylpropionate/2,3-dihydroxicinnamic acid 1,2-dioxygenase (314 aa).

The active-site Proton donor is the histidine 115. The Proton acceptor role is filled by histidine 179.

Belongs to the LigB/MhpB extradiol dioxygenase family. In terms of assembly, homotetramer. Fe(2+) serves as cofactor.

The catalysed reaction is 3-(2,3-dihydroxyphenyl)propanoate + O2 = (2Z,4E)-2-hydroxy-6-oxonona-2,4-dienedioate + H(+). It carries out the reaction (2E)-3-(2,3-dihydroxyphenyl)prop-2-enoate + O2 = (2Z,4E,7E)-2-hydroxy-6-oxonona-2,4,7-trienedioate + H(+). It participates in aromatic compound metabolism; 3-phenylpropanoate degradation. Its function is as follows. Catalyzes the non-heme iron(II)-dependent oxidative cleavage of 2,3-dihydroxyphenylpropionic acid and 2,3-dihydroxicinnamic acid into 2-hydroxy-6-ketononadienedioate and 2-hydroxy-6-ketononatrienedioate, respectively. The protein is 2,3-dihydroxyphenylpropionate/2,3-dihydroxicinnamic acid 1,2-dioxygenase of Escherichia coli O157:H7.